The primary structure comprises 105 residues: Tyrosine-protein phosphatase 12 (105 aa).

Positions 1-105 (WRMIWEKRVE…NLRRIVRTEF (105 aa)) constitute a Tyrosine-protein phosphatase domain. Asp84 contributes to the substrate binding site.

It belongs to the protein-tyrosine phosphatase family.

The catalysed reaction is O-phospho-L-tyrosyl-[protein] + H2O = L-tyrosyl-[protein] + phosphate. The polypeptide is Tyrosine-protein phosphatase 12 (STY-12) (Styela plicata (Wrinkled sea squirt)).